Consider the following 68-residue polypeptide: Protein transport protein Sec61 subunit gamma (68 aa).

Residues methionine 1–glutamate 32 are Cytoplasmic-facing. Residues phenylalanine 33–isoleucine 61 traverse the membrane as a helical segment. At asparagine 62–serine 68 the chain is on the extracellular side.

It belongs to the SecE/SEC61-gamma family. In terms of assembly, heterotrimeric complex composed of SEC61-alpha, SEC61-beta and SEC61-gamma.

The protein localises to the endoplasmic reticulum membrane. Its function is as follows. Necessary for protein translocation in the endoplasmic reticulum. The chain is Protein transport protein Sec61 subunit gamma (SEC61G) from Gryllotalpa orientalis (Oriental mole cricket).